Consider the following 400-residue polypeptide: Acyl-CoA dehydrogenase FadE26 (400 aa).

Residues 127 to 130 (IGYS), threonine 136, and serine 162 each bind FAD. Glutamate 247 (proton acceptor) is an active-site residue. An FAD-binding site is contributed by 380–382 (TNE).

This sequence belongs to the acyl-CoA dehydrogenase family. In terms of assembly, heterotetramer (dimer of heterodimers) composed of FadE26 and FadE27. Requires FAD as cofactor.

It catalyses the reaction (25S)-3-oxocholest-4-en-26-oyl-CoA + A = 3-oxo-cholest-4,24-dien-26-oyl-CoA + AH2. It functions in the pathway steroid metabolism; cholesterol degradation. Uncompetitively inhibited by high concentration of 3-OCS-CoA. Involved in the first cycle of side chain dehydrogenation in the beta-oxidation of cholesterol catabolism. It contributes partly to the virulence by increasing the efficiency of beta-oxidation. Catalyzes the dehydrogenation of acyl-CoA ester side chains of (25S)-3-oxo-cholest-4-en-26-oyl-CoA (3-OCS-CoA) to yield (24E)-3-oxo-cholest-4,24-dien-26-oyl-CoA. Also able to dehydrogenate steroyl-CoA such as 3-oxo-chol-4-en-24-oyl-CoA (3-OCO-CoA) as well as 3-oxo-4-pregnene-20-carboxyl-CoA (3-OPC-CoA). It dehydrogenates only (25S)-OCS-CoA diastereomer. This chain is Acyl-CoA dehydrogenase FadE26 (fadE26), found in Mycobacterium tuberculosis (strain ATCC 25618 / H37Rv).